We begin with the raw amino-acid sequence, 619 residues long: Frizzled and smoothened-like protein L (619 aa).

A signal peptide spans 1 to 24 (MITNKSKYYFFLILIFINFYLINC). N-linked (GlcNAc...) asparagine glycans are attached at residues Asn4, Asn63, Asn112, Asn143, Asn159, Asn184, and Asn203. The Extracellular portion of the chain corresponds to 25–245 (QEEYPIDQTG…KQWDRLYDLS (221 aa)). One can recognise an FZ domain in the interval 31-169 (DQTGKCEPYI…YSIYDLSLVN (139 aa)). Cystine bridges form between Cys36–Cys106 and Cys48–Cys99. A helical transmembrane segment spans residues 246–266 (NSLSVLSCVGTLFLLFTFNIL). At 267-278 (NKKINRFDRMNS) the chain is on the cytoplasmic side. A helical membrane pass occupies residues 279–299 (LFNGSVFMMSLSGVIILFAGG). The Extracellular segment spans residues 300–321 (PRALIKDGGARISVWQDPLCSA). A helical transmembrane segment spans residues 322 to 342 (TGFIFQLFSIAAILFWVVMSF). Residues 343–358 (ELWYKIKFMTKKLDLK) are Cytoplasmic-facing. The chain crosses the membrane as a helical span at residues 359–379 (KYYIPFIIIVSLVFSIIPLAT). Residues 380–402 (KNYRMIRGNMHCWVHTTKLQNSL) lie on the Extracellular side of the membrane. A helical transmembrane segment spans residues 403 to 423 (FWIPLGIAITIGTIFIGLVMF). At 424–444 (EIHRIVSANSKGGVLKLEIKS) the chain is on the cytoplasmic side. The chain crosses the membrane as a helical span at residues 445–465 (ILNVALIYLTFIYLFAFNFYM). The Extracellular segment spans residues 466-497 (NGQEGVVYGQIESFYQCTLENDASECTIQGPS). Residues 498–518 (IGSLGFFIFCIRIYGVYCFIL) traverse the membrane as a helical segment. Residues 519 to 619 (QGLNYRAYNI…TLKDIEVSKS (101 aa)) lie on the Cytoplasmic side of the membrane. A disordered region spans residues 581 to 605 (LNIDSAFSKNNESDDEDDYDPYKKS).

The protein belongs to the G-protein coupled receptor Fz/Smo family.

The protein resides in the membrane. The polypeptide is Frizzled and smoothened-like protein L (fslL) (Dictyostelium discoideum (Social amoeba)).